Consider the following 641-residue polypeptide: Sodium-dependent nutrient amino acid transporter 1 (641 aa).

The interval 1–38 is disordered; the sequence is MELKGVQPSNGSSNGSGNGATNAASTEKTDAEKPTAER. Topologically, residues 1-40 are cytoplasmic; it reads MELKGVQPSNGSSNGSGNGATNAASTEKTDAEKPTAERTN. A compositionally biased stretch (low complexity) spans 9–26; sequence SNGSSNGSGNGATNAAST. Positions 27-36 are enriched in basic and acidic residues; the sequence is EKTDAEKPTA. 3 helical membrane-spanning segments follow: residues 41–61, 74–94, and 111–131; these read WGNG…LGNV, GAFL…MYYL, and SVVP…ICII. N185 and N190 each carry an N-linked (GlcNAc...) asparagine glycan. 9 helical membrane passes run 229 to 249, 258 to 278, 307 to 327, 341 to 361, 401 to 421, 447 to 467, 474 to 494, 516 to 536, and 552 to 572; these read PDWK…LVIM, AAYF…IRAV, AVVQ…MFAS, IVTT…FAIL, LFSV…IVAL, VCGF…ILTL, TYVV…VYGL, CWSF…MVTI, and IAGW…GLWY.

The protein belongs to the sodium:neurotransmitter symporter (SNF) (TC 2.A.22) family. As to expression, in larvae, weak specific expression in the anterior midgut just proximal to the gastric caeca reproductive rudiments, common ureters of the Malpighian tubules, and distal swollen portion of the anterior pair of Malpighian tubules. Expression is also seen in the imaginal disks of the head; brain hemispheres and the ventral ganglion. Stronger expression in the posterior midgut.

It localises to the membrane. Its function is as follows. Unusual broad substrate spectrum amino acid:sodium cotransporter that promotes absorption of the D isomers of essential amino acids. Neutral amino acids are the preferred substrates, especially methionine and phenylalanine. This is Sodium-dependent nutrient amino acid transporter 1 (NAAT1) from Drosophila melanogaster (Fruit fly).